A 129-amino-acid polypeptide reads, in one-letter code: UPF0325 protein YPTS_3127 (129 aa).

It belongs to the UPF0325 family.

This Yersinia pseudotuberculosis serotype IB (strain PB1/+) protein is UPF0325 protein YPTS_3127.